We begin with the raw amino-acid sequence, 169 residues long: MYTSGYAHRASSFSSAASKIVRVSTENTTAGLISEVVYREDQPMMTQLLLLPLLQQLGQQSRWQLWLTPQQKLSREWVQASGLPLTKVMQISQLSPCHTVESMVRALRTGNYSVVIGWLADDLTEEEHAELVDAANEGNAMGFIMRPVSASSHATRQLSGLKIHSNLYH.

Positions 106 to 112 are ftsZ binding; the sequence is ALRTGNY. The tract at residues 162–169 is lon protease binding; sequence KIHSNLYH.

It belongs to the SulA family. Interacts with FtsZ. Post-translationally, is rapidly cleaved and degraded by the Lon protease once DNA damage is repaired.

Its function is as follows. Component of the SOS system and an inhibitor of cell division. Accumulation of SulA causes rapid cessation of cell division and the appearance of long, non-septate filaments. In the presence of GTP, binds a polymerization-competent form of FtsZ in a 1:1 ratio, thus inhibiting FtsZ polymerization and therefore preventing it from participating in the assembly of the Z ring. This mechanism prevents the premature segregation of damaged DNA to daughter cells during cell division. This is Cell division inhibitor SulA from Escherichia coli O7:K1 (strain IAI39 / ExPEC).